The sequence spans 354 residues: Ornithine transcarbamylase, mitochondrial (354 aa).

The N-terminal 32 residues, 1 to 32 (MLSNLRILLNNAALRKGHTSVVRHFWCGKPVQ), are a transit peptide targeting the mitochondrion. K70 carries the post-translational modification N6-acetyllysine; alternate. K70 carries the N6-succinyllysine; alternate modification. Position 80 is an N6-succinyllysine (K80). The residue at position 88 (K88) is an N6-acetyllysine; alternate. At K88 the chain carries N6-succinyllysine; alternate. Carbamoyl phosphate is bound at residue 90-94 (STRTR). A Phosphoserine modification is found at S133. A carbamoyl phosphate-binding site is contributed by R141. R141 serves as a coordination point for L-ornithine. Residue K144 is modified to N6-acetyllysine; alternate. K144 is subject to N6-succinyllysine; alternate. Residue H168 coordinates carbamoyl phosphate. N199 lines the L-ornithine pocket. Residues K221, K231, and K238 each carry the N6-acetyllysine; alternate modification. K221, K231, and K238 each carry N6-succinyllysine; alternate. Position 243 is an N6-acetyllysine (K243). 263-267 (DTWIS) contacts L-ornithine. N6-succinyllysine is present on residues K274 and K289. K292 is subject to N6-acetyllysine; alternate. N6-succinyllysine; alternate is present on K292. 302-305 (HCLP) contributes to the L-ornithine binding site. The active site involves C303. N6-acetyllysine; alternate is present on K307. K307 carries the N6-succinyllysine; alternate modification. R330 is a binding site for carbamoyl phosphate. R330 is a binding site for L-ornithine.

It belongs to the aspartate/ornithine carbamoyltransferase superfamily. OTCase family. In terms of assembly, homotrimer. In terms of processing, acetylation at Lys-88 negatively regulates ornithine carbamoyltransferase activity in response to nutrient signals.

It is found in the mitochondrion matrix. It carries out the reaction carbamoyl phosphate + L-ornithine = L-citrulline + phosphate + H(+). It participates in nitrogen metabolism; urea cycle; L-citrulline from L-ornithine and carbamoyl phosphate: step 1/1. With respect to regulation, negatively regulated by lysine acetylation. In terms of biological role, catalyzes the second step of the urea cycle, the condensation of carbamoyl phosphate with L-ornithine to form L-citrulline. The urea cycle ensures the detoxification of ammonia by converting it to urea for excretion. The chain is Ornithine transcarbamylase, mitochondrial from Mus musculus (Mouse).